Reading from the N-terminus, the 504-residue chain is Tyrosine-protein phosphatase non-receptor type substrate 1 (504 aa).

A signal peptide spans methionine 1 to glycine 30. Topologically, residues glutamate 31–tyrosine 373 are extracellular. The Ig-like V-type domain occupies glutamate 32–glycine 137. 2 disulfide bridges follow: cysteine 55-cysteine 121 and cysteine 170-cysteine 228. 2 consecutive Ig-like C1-type domains span residues proline 148–serine 247 and proline 254–lysine 348. N-linked (GlcNAc...) asparagine glycans are attached at residues asparagine 245, asparagine 270, asparagine 292, and asparagine 319. Cysteine 273 and cysteine 331 are disulfide-bonded. Residues aspartate 336–glutamate 355 show a composition bias toward basic and acidic residues. Positions aspartate 336–asparagine 364 are disordered. Residues isoleucine 374 to valine 394 form a helical membrane-spanning segment. At arginine 395–lysine 504 the chain is on the cytoplasmic side. Positions glutamine 402 to lysine 504 are disordered. A compositionally biased stretch (basic and acidic residues) spans arginine 409 to threonine 421. Tyrosine 429 carries the phosphotyrosine; by Tyr-kinases modification. The SH2-binding signature appears at tyrosine 429 to leucine 432. Positions lysine 439–alanine 444 match the SH3-binding motif. Residues glutamate 446–threonine 467 show a composition bias toward polar residues. Tyrosine 453 and tyrosine 470 each carry phosphotyrosine; by Tyr-kinases. 3 consecutive short sequence motifs (SH2-binding) follow at residues tyrosine 453–isoleucine 456, tyrosine 470–leucine 473, and tyrosine 496–valine 499. Tyrosine 496 is subject to Phosphotyrosine.

In terms of assembly, binds PTPN11 when tyrosine-phosphorylated, except in macrophages, where it primarily binds PTPN6. Binds GRB2 in vitro. Binds FGR. Binds JAK2 irrespective of its phosphorylation status and forms a stable complex. Binds SCAP1 and/or SCAP2. The resulting complex recruits FYB1. Binds PTK2B. Interacts with TRIM2. Post-translationally, N-glycosylated. In terms of processing, phosphorylated on tyrosine residues in response to stimulation with EGF, growth hormone, insulin and PDGF. Dephosphorylated by PTPN11. Ubiquitous. Highly expressed in brain. Detected on myeloid cells, but not T-cells. Detected at lower levels in heart, placenta, lung, testis, ovary, colon, liver, small intestine, prostate, spleen, kidney, skeletal muscle and pancreas.

It localises to the membrane. Its function is as follows. Immunoglobulin-like cell surface receptor for CD47. Acts as docking protein and induces translocation of PTPN6, PTPN11 and other binding partners from the cytosol to the plasma membrane. Supports adhesion of cerebellar neurons, neurite outgrowth and glial cell attachment. May play a key role in intracellular signaling during synaptogenesis and in synaptic function. Involved in the negative regulation of receptor tyrosine kinase-coupled cellular responses induced by cell adhesion, growth factors or insulin. Mediates negative regulation of phagocytosis, mast cell activation and dendritic cell activation. CD47 binding prevents maturation of immature dendritic cells and inhibits cytokine production by mature dendritic cells. Plays a role in antiviral immunity and limits new world arenavirus infection by decreasing virus internalization. Receptor for THBS1. Interaction with THBS1 stimulates phosphorylation of SIRPA. In response to THBS1, involved in ROS signaling in non-phagocytic cells, stimulating NADPH oxidase-derived ROS production. The chain is Tyrosine-protein phosphatase non-receptor type substrate 1 (SIRPA) from Homo sapiens (Human).